Here is a 107-residue protein sequence, read N- to C-terminus: Nucleoid-associated protein YaaK (107 aa).

The disordered stretch occupies residues 1–24 (MRGGMGNMQKMMKQMQKMQKDMAK). Over residues 8-17 (MQKMMKQMQK) the composition is skewed to low complexity.

The protein belongs to the YbaB/EbfC family. Homodimer.

Its subcellular location is the cytoplasm. It localises to the nucleoid. Functionally, binds to DNA and alters its conformation. May be involved in regulation of gene expression, nucleoid organization and DNA protection. The chain is Nucleoid-associated protein YaaK (yaaK) from Bacillus subtilis (strain 168).